Reading from the N-terminus, the 397-residue chain is S-adenosylmethionine:tRNA ribosyltransferase-isomerase (397 aa).

Belongs to the QueA family. As to quaternary structure, monomer.

It localises to the cytoplasm. It catalyses the reaction 7-aminomethyl-7-carbaguanosine(34) in tRNA + S-adenosyl-L-methionine = epoxyqueuosine(34) in tRNA + adenine + L-methionine + 2 H(+). It functions in the pathway tRNA modification; tRNA-queuosine biosynthesis. Transfers and isomerizes the ribose moiety from AdoMet to the 7-aminomethyl group of 7-deazaguanine (preQ1-tRNA) to give epoxyqueuosine (oQ-tRNA). The protein is S-adenosylmethionine:tRNA ribosyltransferase-isomerase of Nostoc sp. (strain PCC 7120 / SAG 25.82 / UTEX 2576).